A 246-amino-acid polypeptide reads, in one-letter code: Homeobox protein SIX6 (246 aa).

The segment at residues 128–187 (GEQKTHCFKERTRHLLREWYLQDPYPNPSKKRELAQATGLTPTQVGNWFKNRRQRDRAAA) is a DNA-binding region (homeobox). Residues 190–246 (NRLQQQVLSQGSGRALRAEGDGTPEVLGVATSPAASLSSKAATSAISITSSDSECDI) form a disordered region. The segment covering 191–201 (RLQQQVLSQGS) has biased composition (polar residues). At T212 the chain carries Phosphothreonine. Low complexity predominate over residues 219–246 (ATSPAASLSSKAATSAISITSSDSECDI). A phosphoserine mark is found at S221, S225, S227, and S228.

This sequence belongs to the SIX/Sine oculis homeobox family. As to quaternary structure, interacts with TLE4 and TLE5. Expressed in the developing and adult retina. Also expressed in the hypothalamic and the pituitary regions.

Its subcellular location is the nucleus. In terms of biological role, may be involved in eye development. The sequence is that of Homeobox protein SIX6 (SIX6) from Homo sapiens (Human).